The primary structure comprises 594 residues: Probable translation initiation factor IF-2 (594 aa).

The 216-residue stretch at 11–226 folds into the tr-type G domain; it reads LRTPIVCVMG…LIGLAQRFLE (216 aa). The G1 stretch occupies residues 20–27; sequence GHVDHGKT. 20–27 contacts GTP; the sequence is GHVDHGKT. The G2 stretch occupies residues 45 to 49; it reads AITQH. Residues 81–84 are G3; that stretch reads DTPG. Residues 81 to 85 and 135 to 138 contribute to the GTP site; these read DTPGH and NKID. Positions 135-138 are G4; it reads NKID. The tract at residues 203–205 is G5; it reads SAR.

It belongs to the TRAFAC class translation factor GTPase superfamily. Classic translation factor GTPase family. IF-2 subfamily.

Functionally, function in general translation initiation by promoting the binding of the formylmethionine-tRNA to ribosomes. Seems to function along with eIF-2. This Methanocella arvoryzae (strain DSM 22066 / NBRC 105507 / MRE50) protein is Probable translation initiation factor IF-2.